Consider the following 674-residue polypeptide: UvrABC system protein B (674 aa).

One can recognise a Helicase ATP-binding domain in the interval 26–414 (EGLDSGLAHQ…SGNDIAEQVV (389 aa)). An ATP-binding site is contributed by 39–46 (GVTGSGKT). Positions 92–115 (YYDYYQPEAYVPTTDTFIEKDASV) match the Beta-hairpin motif. The Helicase C-terminal domain maps to 432–586 (QVDDLLSEIR…ALHNKKNGIT (155 aa)). The 36-residue stretch at 634–669 (ELEIQRLETEMYDLAQNLEFEKAAEARDKIHTLRQQ) folds into the UVR domain.

Belongs to the UvrB family. As to quaternary structure, forms a heterotetramer with UvrA during the search for lesions. Interacts with UvrC in an incision complex.

The protein resides in the cytoplasm. The UvrABC repair system catalyzes the recognition and processing of DNA lesions. A damage recognition complex composed of 2 UvrA and 2 UvrB subunits scans DNA for abnormalities. Upon binding of the UvrA(2)B(2) complex to a putative damaged site, the DNA wraps around one UvrB monomer. DNA wrap is dependent on ATP binding by UvrB and probably causes local melting of the DNA helix, facilitating insertion of UvrB beta-hairpin between the DNA strands. Then UvrB probes one DNA strand for the presence of a lesion. If a lesion is found the UvrA subunits dissociate and the UvrB-DNA preincision complex is formed. This complex is subsequently bound by UvrC and the second UvrB is released. If no lesion is found, the DNA wraps around the other UvrB subunit that will check the other stand for damage. The chain is UvrABC system protein B from Photobacterium profundum (strain SS9).